The sequence spans 276 residues: Dermonecrotic toxin LvSicTox-alphaII1 (276 aa).

His5 is a catalytic residue. Positions 25 and 27 each coordinate Mg(2+). His41 functions as the Nucleophile in the catalytic mechanism. 2 cysteine pairs are disulfide-bonded: Cys45/Cys51 and Cys47/Cys193. Residue Asp85 coordinates Mg(2+).

This sequence belongs to the arthropod phospholipase D family. Class II subfamily. Mg(2+) is required as a cofactor. Expressed by the venom gland.

The protein resides in the secreted. The catalysed reaction is an N-(acyl)-sphingosylphosphocholine = an N-(acyl)-sphingosyl-1,3-cyclic phosphate + choline. It catalyses the reaction an N-(acyl)-sphingosylphosphoethanolamine = an N-(acyl)-sphingosyl-1,3-cyclic phosphate + ethanolamine. It carries out the reaction a 1-acyl-sn-glycero-3-phosphocholine = a 1-acyl-sn-glycero-2,3-cyclic phosphate + choline. The enzyme catalyses a 1-acyl-sn-glycero-3-phosphoethanolamine = a 1-acyl-sn-glycero-2,3-cyclic phosphate + ethanolamine. Its function is as follows. Dermonecrotic toxins cleave the phosphodiester linkage between the phosphate and headgroup of certain phospholipids (sphingolipid and lysolipid substrates), forming an alcohol (often choline) and a cyclic phosphate. This toxin acts on sphingomyelin (SM). It may also act on ceramide phosphoethanolamine (CPE), lysophosphatidylcholine (LPC) and lysophosphatidylethanolamine (LPE), but not on lysophosphatidylserine (LPS), and lysophosphatidylglycerol (LPG). It acts by transphosphatidylation, releasing exclusively cyclic phosphate products as second products. Induces dermonecrosis, hemolysis, increased vascular permeability, edema, inflammatory response, and platelet aggregation. This Loxosceles variegata (Recluse spider) protein is Dermonecrotic toxin LvSicTox-alphaII1.